Here is a 140-residue protein sequence, read N- to C-terminus: Acyl carrier protein 1, chloroplastic (140 aa).

A chloroplast-targeting transit peptide spans 1–56 (MASAAAGASICIKSASFSPLAPGRISSLRSVSLPVSRKSFPSLKSSKSSFALRVSC). In terms of domain architecture, Carrier spans 60–135 (PETVAKVCGI…DAADLIEKLM (76 aa)). S95 bears the O-(pantetheine 4'-phosphoryl)serine mark.

Belongs to the acyl carrier protein (ACP) family. In terms of processing, 4'-phosphopantetheine is transferred from CoA to a specific serine of apo-ACP by acpS. This modification is essential for activity because fatty acids are bound in thioester linkage to the sulfhydryl of the prosthetic group.

The protein resides in the plastid. It localises to the chloroplast. It participates in lipid metabolism; fatty acid biosynthesis. In terms of biological role, carrier of the growing fatty acid chain in fatty acid biosynthesis. This Cuphea lanceolata (Cigar flower) protein is Acyl carrier protein 1, chloroplastic (ACL1.1).